A 191-amino-acid chain; its full sequence is MDAHFLKSASDLKDCPQDNIPEICFMGRSNVGKSSLINAFFKKKLAKTSATPGRTQLLNYFEYKDKRFVDLPGYGFAKINKNKKDFITNLLTQFLNFRSNLVGVVLIVDSGVVTVQDQEVVKIILQTGLNFLIVANKFDKLNQSERYFSLKNIANFLKVNFDKCVFASTKTHHNLALVHKKIFELFVEDER.

In terms of domain architecture, EngB-type G spans 19-188 (NIPEICFMGR…HKKIFELFVE (170 aa)). GTP-binding positions include 27-34 (GRSNVGKS), 53-57 (GRTQL), 70-73 (DLPG), 136-139 (NKFD), and 167-169 (AST). The Mg(2+) site is built by serine 34 and threonine 55.

It belongs to the TRAFAC class TrmE-Era-EngA-EngB-Septin-like GTPase superfamily. EngB GTPase family. Mg(2+) serves as cofactor.

Functionally, necessary for normal cell division and for the maintenance of normal septation. This is Probable GTP-binding protein EngB from Mycoplasma genitalium (strain ATCC 33530 / DSM 19775 / NCTC 10195 / G37) (Mycoplasmoides genitalium).